The chain runs to 262 residues: 3-methyl-2-oxobutanoate hydroxymethyltransferase (262 aa).

The Mg(2+) site is built by Asp43 and Asp82. 3-methyl-2-oxobutanoate is bound by residues 43–44 (DS), Asp82, and Lys110. Mg(2+) is bound at residue Glu112. Catalysis depends on Glu179, which acts as the Proton acceptor.

The protein belongs to the PanB family. As to quaternary structure, homodecamer; pentamer of dimers. Requires Mg(2+) as cofactor.

The protein resides in the cytoplasm. The enzyme catalyses 3-methyl-2-oxobutanoate + (6R)-5,10-methylene-5,6,7,8-tetrahydrofolate + H2O = 2-dehydropantoate + (6S)-5,6,7,8-tetrahydrofolate. It participates in cofactor biosynthesis; (R)-pantothenate biosynthesis; (R)-pantoate from 3-methyl-2-oxobutanoate: step 1/2. In terms of biological role, catalyzes the reversible reaction in which hydroxymethyl group from 5,10-methylenetetrahydrofolate is transferred onto alpha-ketoisovalerate to form ketopantoate. This Sodalis glossinidius (strain morsitans) protein is 3-methyl-2-oxobutanoate hydroxymethyltransferase.